A 661-amino-acid polypeptide reads, in one-letter code: Kyphoscoliosis peptidase (661 aa).

Polar residues predominate over residues 28 to 41 (GTLSDQQANPSSLL). Disordered stretches follow at residues 28–47 (GTLS…GGGF) and 115–136 (QGDK…HAYP). Catalysis depends on residues C225, H267, and D282.

The protein belongs to the transglutaminase-like superfamily. Interacts with IGFN1 and FLNC. In terms of tissue distribution, highly expressed in skeletal muscle.

Its subcellular location is the cytoplasm. The protein resides in the cytoskeleton. It is found in the myofibril. It localises to the sarcomere. The protein localises to the z line. Functionally, probable cytoskeleton-associated protease required for normal muscle growth. Involved in function, maturation and stabilization of the neuromuscular junction. May act by cleaving muscle-specific proteins such as FLNC. The protein is Kyphoscoliosis peptidase of Homo sapiens (Human).